Here is a 537-residue protein sequence, read N- to C-terminus: Chaperonin GroEL (537 aa).

Residues 29–32, 86–90, glycine 413, 477–479, and aspartate 493 contribute to the ATP site; these read TLGP, DGTTT, and NAA.

This sequence belongs to the chaperonin (HSP60) family. Forms a cylinder of 14 subunits composed of two heptameric rings stacked back-to-back. Interacts with the co-chaperonin GroES.

The protein resides in the cytoplasm. It catalyses the reaction ATP + H2O + a folded polypeptide = ADP + phosphate + an unfolded polypeptide.. Together with its co-chaperonin GroES, plays an essential role in assisting protein folding. The GroEL-GroES system forms a nano-cage that allows encapsulation of the non-native substrate proteins and provides a physical environment optimized to promote and accelerate protein folding. The sequence is that of Chaperonin GroEL from Lactobacillus delbrueckii subsp. bulgaricus (strain ATCC 11842 / DSM 20081 / BCRC 10696 / JCM 1002 / NBRC 13953 / NCIMB 11778 / NCTC 12712 / WDCM 00102 / Lb 14).